Here is a 377-residue protein sequence, read N- to C-terminus: Chorismate synthase (377 aa).

The NADP(+) site is built by Arg-48 and Arg-54. FMN contacts are provided by residues 125-127, 238-239, Gly-278, 293-297, and Arg-319; these read RSS, NA, and KPTSS.

It belongs to the chorismate synthase family. In terms of assembly, homotetramer. Requires FMNH2 as cofactor.

It catalyses the reaction 5-O-(1-carboxyvinyl)-3-phosphoshikimate = chorismate + phosphate. Its pathway is metabolic intermediate biosynthesis; chorismate biosynthesis; chorismate from D-erythrose 4-phosphate and phosphoenolpyruvate: step 7/7. Catalyzes the anti-1,4-elimination of the C-3 phosphate and the C-6 proR hydrogen from 5-enolpyruvylshikimate-3-phosphate (EPSP) to yield chorismate, which is the branch point compound that serves as the starting substrate for the three terminal pathways of aromatic amino acid biosynthesis. This reaction introduces a second double bond into the aromatic ring system. The protein is Chorismate synthase of Aromatoleum aromaticum (strain DSM 19018 / LMG 30748 / EbN1) (Azoarcus sp. (strain EbN1)).